The sequence spans 254 residues: Triosephosphate isomerase (254 aa).

10-12 contacts substrate; it reads NWK. Residue His-99 is the Electrophile of the active site. The active-site Proton acceptor is Glu-169. Substrate-binding positions include Gly-175, Ser-215, and 236–237; that span reads GG.

This sequence belongs to the triosephosphate isomerase family. As to quaternary structure, homodimer.

It localises to the cytoplasm. It carries out the reaction D-glyceraldehyde 3-phosphate = dihydroxyacetone phosphate. It functions in the pathway carbohydrate biosynthesis; gluconeogenesis. Its pathway is carbohydrate degradation; glycolysis; D-glyceraldehyde 3-phosphate from glycerone phosphate: step 1/1. In terms of biological role, involved in the gluconeogenesis. Catalyzes stereospecifically the conversion of dihydroxyacetone phosphate (DHAP) to D-glyceraldehyde-3-phosphate (G3P). This is Triosephosphate isomerase from Chlamydia abortus (strain DSM 27085 / S26/3) (Chlamydophila abortus).